The primary structure comprises 1130 residues: Tyrosine-protein kinase ABL1 (1130 aa).

Residues 1–60 are CAP; that stretch reads MLEICLKLVGCKSKKGLSSSSSCYLEEALQRPVASDFEPQGLSEAARWNSKENLLAGPSE. Leucine 2 is lipidated: N-myristoyl glycine. At serine 50 the chain carries Phosphoserine. The 61-residue stretch at 61–121 folds into the SH3 domain; it reads NDPNLFVALY…PSNYITPVNS (61 aa). Residue tyrosine 70 is modified to Phosphotyrosine; by autocatalysis. Phosphotyrosine occurs at positions 115, 128, 139, 172, 185, and 215. An SH2 domain is found at 127 to 217; that stretch reads WYHGPVSRNA…GLITTLHYPA (91 aa). Position 226 is a phosphotyrosine; by autocatalysis (tyrosine 226). At serine 229 the chain carries Phosphoserine. In terms of domain architecture, Protein kinase spans 242-493; it reads ITMKHKLGGG…PSFAEIHQAF (252 aa). 248–256 lines the ATP pocket; that stretch reads LGGGQYGEV. 2 positions are modified to phosphotyrosine: tyrosine 253 and tyrosine 257. ATP is bound by residues lysine 271 and 316 to 322; that span reads EFMTYGN. Aspartate 363 serves as the catalytic Proton acceptor. The short motif at 381–405 is the Kinase activation loop element; sequence DFGLSRLMTGDTYTAHAGAKFPIKW. Phosphotyrosine; by autocatalysis and SRC-type Tyr-kinases is present on tyrosine 393. Tyrosine 413 carries the phosphotyrosine modification. A phosphoserine mark is found at serine 446, serine 559, and serine 569. The interval 518-996 is disordered; that stretch reads AVSTLLQAPE…SASSALAGDQ (479 aa). Residues 537-566 are compositionally biased toward basic and acidic residues; it reads RAAEHRDTTDVPEMPHSKGQGESDPLDHEP. Residues 586 to 597 show a composition bias toward basic and acidic residues; it reads EDERLLPKDKKT. Positions 605–609 match the Nuclear localization signal 1 motif; it reads KKKKK. Phosphoserine; by PAK2 occurs at positions 618 and 619. Phosphoserine is present on residues serine 620, serine 659, and serine 683. Residues 620–640 show a composition bias toward basic and acidic residues; sequence SFREMDGQPERRGAGEEEGRD. Polar residues predominate over residues 689-698; it reads KSSTLTSSRL. Positions 709 to 715 match the Nuclear localization signal 2 motif; the sequence is SSKRFLR. Lysine 711 is modified (N6-acetyllysine; by EP300). A Phosphoserine modification is found at serine 718. Phosphothreonine occurs at positions 735 and 751. Positions 740-752 are enriched in polar residues; it reads LQSTGRQFDSSTF. Residues 755 to 774 are compositionally biased toward basic and acidic residues; that stretch reads HKSEKPALPRKRAGENRSDQ. Residues 762–769 carry the Nuclear localization signal 3 motif; the sequence is LPRKRAGE. A Phosphothreonine modification is found at threonine 781. The segment covering 788–802 has biased composition (basic and acidic residues); sequence KKNEEAADEVFKDIM. Residues threonine 814, threonine 823, threonine 844, and threonine 852 each carry the phosphothreonine modification. At serine 855 the chain carries Phosphoserine. The DNA-binding stretch occupies residues 869–968; it reads PAEESRVRRH…VLPATPKPQS (100 aa). Positions 881–891 are enriched in basic and acidic residues; it reads SSESPGRDKGK. Low complexity predominate over residues 905–915; the sequence is ASAGKAGGKPS. At serine 917 the chain carries Phosphoserine. The tract at residues 953–1130 is F-actin-binding; the sequence is EGLKKPVLPA…VKEISDIVQR (178 aa). The segment covering 965-975 has biased composition (polar residues); that stretch reads KPQSAKPSGTP. At serine 977 the chain carries Phosphoserine. The span at 984–993 shows a compositional bias: low complexity; it reads TLPSASSALA. The short motif at 1090 to 1100 is the Nuclear export signal element; sequence LENNLRELQIC.

The protein belongs to the protein kinase superfamily. Tyr protein kinase family. ABL subfamily. In terms of assembly, interacts with SORBS1 following insulin stimulation. Found in a trimolecular complex containing CDK5 and CABLES1. Interacts with CABLES1 and PSTPIP1. Interacts with ZDHHC16, ITGB1 and HCK. Interacts with STX17; probably phosphorylates STX17. Interacts with INPPL1/SHIP2. Interacts with the 14-3-3 proteins, YWHAB, YWHAE, YWHAG, YWHAH, SFN and YWHAZ; the interaction with 14-3-3 proteins requires phosphorylation on Thr-735 and, sequesters ABL1 into the cytoplasm. Interacts with ABI1, ABI2, BCR, CRK, FGR, FYN, HCK, LYN, PSMA7 RAD9A, RAD51, RAD52, TP73 and WASF3. A complex made of ABL1, CTTN and MYLK regulates cortical actin-based cytoskeletal rearrangement critical to sphingosine 1-phosphate (S1P)-mediated endothelial cell (EC) barrier enhancement. Interacts (via SH3 domain) with CASP9; the interaction is direct and increases in the response of cells to genotoxic stress and ABL1/c-Abl activation. Found in a complex with ABL1, ABL2, CRK and UNC119; leading to the inhibition of CRK phosphorylation by ABL kinases. Interacts with TBX21. Interacts with NEDD9/HEF1; interaction is induced by CXCL12 promotion of ABL-mediated phosphorylation of NEDD9/HEF1. Mg(2+) serves as cofactor. Post-translationally, acetylated at Lys-711 by EP300 which promotes the cytoplasmic translocation. Phosphorylation at Tyr-70 by members of the SRC family of kinases disrupts SH3 domain-based autoinhibitory interactions and intermolecular associations, such as that with ABI1, and also enhances kinase activity. Phosphorylation at Tyr-226 and Tyr-393 correlate with increased activity. DNA damage-induced activation of ABL1 requires the function of ATM and Ser-446 phosphorylation. Phosphorylation at Ser-569 has been attributed to a CDC2-associated kinase and is coupled to cell division. Phosphorylation at Ser-618 and Ser-619 by PAK2 increases binding to CRK and reduces binding to ABI1. Phosphorylation on Thr-735 is required for binding 14-3-3 proteins for cytoplasmic translocation. Phosphorylated by PRKDC. In terms of processing, polyubiquitinated. Polyubiquitination of ABL1 leads to degradation. In terms of tissue distribution, widely expressed.

It is found in the cytoplasm. The protein resides in the cytoskeleton. Its subcellular location is the nucleus. The protein localises to the mitochondrion. It localises to the nucleus membrane. The catalysed reaction is L-tyrosyl-[protein] + ATP = O-phospho-L-tyrosyl-[protein] + ADP + H(+). With respect to regulation, stabilized in the inactive form by an association between the SH3 domain and the SH2-TK linker region, interactions of the N-terminal cap, and contributions from an N-terminal myristoyl group and phospholipids. Activated by autophosphorylation as well as by SRC-family kinase-mediated phosphorylation. Activated by RIN1 binding to the SH2 and SH3 domains. Also stimulated by cell death inducers and DNA-damage. Phosphatidylinositol 4,5-bisphosphate (PIP2), a highly abundant phosphoinositide known to regulate cytoskeletal and membrane proteins, also inhibits the tyrosine kinase activity. Activated by 5-(1,3-diaryl-1H-pyrazol-4-yl)hydantoin, 5-[3-(4-fluorophenyl)-1-phenyl-1H-pyrazol-4-yl]-2,4-imidazolidinedione (DPH). Inhibited by ABI1, whose activity is controlled by ABL1 itself through tyrosine phosphorylation. Also inhibited by imatinib mesylate (Gleevec) which is used for the treatment of chronic myeloid leukemia (CML), and by VX-680, an inhibitor that also acts on imatinib-resistant mutants. Its function is as follows. Non-receptor tyrosine-protein kinase that plays a role in many key processes linked to cell growth and survival such as cytoskeleton remodeling in response to extracellular stimuli, cell motility and adhesion, receptor endocytosis, autophagy, DNA damage response and apoptosis. Coordinates actin remodeling through tyrosine phosphorylation of proteins controlling cytoskeleton dynamics like WASF3 (involved in branch formation); ANXA1 (involved in membrane anchoring); DBN1, DBNL, CTTN, RAPH1 and ENAH (involved in signaling); or MAPT and PXN (microtubule-binding proteins). Phosphorylation of WASF3 is critical for the stimulation of lamellipodia formation and cell migration. Involved in the regulation of cell adhesion and motility through phosphorylation of key regulators of these processes such as BCAR1, CRK, CRKL, DOK1, EFS or NEDD9. Phosphorylates multiple receptor tyrosine kinases and more particularly promotes endocytosis of EGFR, facilitates the formation of neuromuscular synapses through MUSK, inhibits PDGFRB-mediated chemotaxis and modulates the endocytosis of activated B-cell receptor complexes. Other substrates which are involved in endocytosis regulation are the caveolin (CAV1) and RIN1. Moreover, ABL1 regulates the CBL family of ubiquitin ligases that drive receptor down-regulation and actin remodeling. Phosphorylation of CBL leads to increased EGFR stability. Involved in late-stage autophagy by regulating positively the trafficking and function of lysosomal components. ABL1 targets to mitochondria in response to oxidative stress and thereby mediates mitochondrial dysfunction and cell death. In response to oxidative stress, phosphorylates serine/threonine kinase PRKD2 at 'Tyr-717'. ABL1 is also translocated in the nucleus where it has DNA-binding activity and is involved in DNA-damage response and apoptosis. Many substrates are known mediators of DNA repair: DDB1, DDB2, ERCC3, ERCC6, RAD9A, RAD51, RAD52 or WRN. Activates the proapoptotic pathway when the DNA damage is too severe to be repaired. Phosphorylates TP73, a primary regulator for this type of damage-induced apoptosis. Phosphorylates the caspase CASP9 on 'Tyr-153' and regulates its processing in the apoptotic response to DNA damage. Phosphorylates PSMA7 that leads to an inhibition of proteasomal activity and cell cycle transition blocks. ABL1 also acts as a regulator of multiple pathological signaling cascades during infection. Several known tyrosine-phosphorylated microbial proteins have been identified as ABL1 substrates. This is the case of A36R of Vaccinia virus, Tir (translocated intimin receptor) of pathogenic E.coli and possibly Citrobacter, CagA (cytotoxin-associated gene A) of H.pylori, or AnkA (ankyrin repeat-containing protein A) of A.phagocytophilum. Pathogens can highjack ABL1 kinase signaling to reorganize the host actin cytoskeleton for multiple purposes, like facilitating intracellular movement and host cell exit. Finally, functions as its own regulator through autocatalytic activity as well as through phosphorylation of its inhibitor, ABI1. Regulates T-cell differentiation in a TBX21-dependent manner. Positively regulates chemokine-mediated T-cell migration, polarization, and homing to lymph nodes and immune-challenged tissues, potentially via activation of NEDD9/HEF1 and RAP1. Phosphorylates TBX21 on tyrosine residues leading to an enhancement of its transcriptional activator activity. In Homo sapiens (Human), this protein is Tyrosine-protein kinase ABL1 (ABL1).